A 66-amino-acid chain; its full sequence is Cold shock protein CspB (66 aa).

The region spanning 4–63 is the CSD domain; the sequence is GKVKWFNNEKGYGFIEVEGGSDVFVHFTAIQGEGFKTLEEGQEVSFEIVQGNRGPQAANV.

In terms of assembly, homodimer.

Its subcellular location is the cytoplasm. Its function is as follows. Affects cell viability at low temperatures. The protein is Cold shock protein CspB (cspB) of Bacillus caldolyticus.